Here is a 150-residue protein sequence, read N- to C-terminus: UPF0756 membrane protein PC1_1142 (150 aa).

4 consecutive transmembrane segments (helical) span residues 1–21 (MAYL…GIIS), 51–71 (YGLS…IASG), 82–102 (FLHW…WLGG), and 127–147 (ALFR…SLLI).

This sequence belongs to the UPF0756 family.

The protein localises to the cell membrane. In Pectobacterium carotovorum subsp. carotovorum (strain PC1), this protein is UPF0756 membrane protein PC1_1142.